Reading from the N-terminus, the 674-residue chain is MMRLRGSAMLRELLLRPPAAVGGVLRRTQPLGTLCRRPRGGSRPAAGLVAAARLHPWWGGGGRAKGPGSGGLSSSPSEILQELGKGGTPPQQQQQQQQQPGASPPAAPGPKDSPGETDAFGNSEGKEMVAAGDNKVKQGLLPSLEDLLFYTIAEGQEKIPVHKFITALKSTGLRTSDPRLKECMDMLRLTLQTTSDGVMLDKDLFKKCVQSNIVLLTQAFRRKFVIPDFMSFTSHIDELYESAKKQSGGKVADYIPQLAKFSPDLWGVSVCTVDGQRHSIGDTKVPFCLQSCVKPLKYAIAVNDLGTEYVHRYVGKEPSGLRFNKLFLNEDDKPHNPMVNAGAIVVTSLIKQGVNNAEKFDYVMQFLNKMAGNEYVGFSNATFQSERESGDRNFAIGYYLKEKKCFPEGTDMVGILDFYFQLCSIEVTCESASVMAATLANGGFCPITGERVLSPEAVRNTLSLMHSCGMYDFSGQFAFHVGLPAKSGVAGGILLVVPNVMGMMCWSPPLDKMGNSVKGIHFCHDLVSLCNFHNYDNLRHFAKKLDPRREGGDQRVKSVINLLFAAYTGDVSALRRFALSAMDMEQRDYDSRTALHVAAAEGHVEVVKFLLEACKVNPFPKDRWNNTPMDEALHFGHHDVFKILQEYQVQYTPQGDSDDGKENQTVHKNLDGLL.

Residues 1–54 (MMRLRGSAMLRELLLRPPAAVGGVLRRTQPLGTLCRRPRGGSRPAAGLVAAARL) constitute a mitochondrion transit peptide. The segment at 56-123 (PWWGGGGRAK…PGETDAFGNS (68 aa)) is disordered. The segment covering 58–71 (WGGGGRAKGPGSGG) has biased composition (gly residues). Over residues 89-101 (PPQQQQQQQQQPG) the composition is skewed to low complexity. Residues lysine 135 and lysine 169 each carry the N6-succinyllysine modification. Serine 291 is a binding site for substrate. Lysine 316 carries the N6-acetyllysine modification. Positions 320–327 (GLRFNKLF) are highly mobile activation loop. The substrate site is built by asparagine 340, glutamate 386, asparagine 393, tyrosine 419, tyrosine 471, and valine 489. ANK repeat units lie at residues 590-619 (DSRT…VNPF) and 624-653 (WNNT…QYTP). Residues 652 to 674 (TPQGDSDDGKENQTVHKNLDGLL) form a disordered region. Serine 657 bears the Phosphoserine mark. Residues 658-674 (DDGKENQTVHKNLDGLL) are compositionally biased toward basic and acidic residues.

The protein belongs to the glutaminase family. In terms of assembly, homotetramer, dimer of dimers. Tetramer composed of 68 and 65 kDa peptides in a 1:3 ratio. Can assemble into higher oligomers (in vitro), but the physiological significance of this is not clear. Interacts with RAF1 and MAP2K2. Interacts with ATCAY; the interaction is direct and may control GLS localization, negatively regulating its activity. In terms of processing, synthesized as a 74-kDa cytosolic precursor which is proteolytically processed by the mitochondrial-processing peptidase (MPP) via a 72-kDa intermediate to yield the mature mitochondrial 68- and 65-kDa subunits. As to expression, kidney, brain, and intestine.

It is found in the mitochondrion. The protein localises to the cytoplasm. Its subcellular location is the cytosol. The protein resides in the mitochondrion matrix. It carries out the reaction L-glutamine + H2O = L-glutamate + NH4(+). Its activity is regulated as follows. Enzyme activity is increased by phosphate, due to increased kcat and increased substrate affinity. Its function is as follows. Catalyzes the first reaction in the primary pathway for the renal catabolism of glutamine. Plays a role in maintaining acid-base homeostasis. Regulates the levels of the neurotransmitter glutamate, the main excitatory neurotransmitter in the brain. In Rattus norvegicus (Rat), this protein is Glutaminase kidney isoform, mitochondrial (Gls).